The chain runs to 498 residues: ATP synthase subunit beta, chloroplastic (498 aa).

ATP is bound at residue 172-179; it reads GGAGVGKT.

It belongs to the ATPase alpha/beta chains family. In terms of assembly, F-type ATPases have 2 components, CF(1) - the catalytic core - and CF(0) - the membrane proton channel. CF(1) has five subunits: alpha(3), beta(3), gamma(1), delta(1), epsilon(1). CF(0) has four main subunits: a(1), b(1), b'(1) and c(9-12).

Its subcellular location is the plastid. It localises to the chloroplast thylakoid membrane. It carries out the reaction ATP + H2O + 4 H(+)(in) = ADP + phosphate + 5 H(+)(out). Its function is as follows. Produces ATP from ADP in the presence of a proton gradient across the membrane. The catalytic sites are hosted primarily by the beta subunits. The protein is ATP synthase subunit beta, chloroplastic of Triticum aestivum (Wheat).